The sequence spans 122 residues: Lysozyme (122 aa).

The 116-residue stretch at 3–118 (GGIVSQRCLS…WNRLQKISGC (116 aa)) folds into the I-type lysozyme domain. Intrachain disulfides connect C10/C86, C13/C118, C15/C21, C26/C35, C48/C68, C58/C64, and C82/C100. The Proton donor role is filled by E18. D29 serves as the catalytic Nucleophile. Residue 41–47 (KEAYWID) participates in substrate binding. Residues Y72, H93, 93–95 (HNG), and K102 contribute to the substrate site.

This sequence belongs to the glycosyl hydrolase 22 family. Type-I lysozyme subfamily. As to quaternary structure, monomer.

The protein localises to the secreted. It carries out the reaction Hydrolysis of (1-&gt;4)-beta-linkages between N-acetylmuramic acid and N-acetyl-D-glucosamine residues in a peptidoglycan and between N-acetyl-D-glucosamine residues in chitodextrins.. In terms of biological role, has bacteriolytic activity against Gram-positive bacteria M.luteus. Also has chitinase activity. The sequence is that of Lysozyme from Meretrix lusoria (Hard clam).